The sequence spans 757 residues: Cellulose synthase-like protein B1 (757 aa).

The next 2 helical transmembrane spans lie at 18-38 (TNYF…SLLL) and 50-70 (VWLV…LITC). The active site involves Asp-136. Residues 186–216 (EFNRDWEKTKREYEKLRRKVEDATGDSHMLD) adopt a coiled-coil conformation. Residue Asp-462 is part of the active site. A run of 6 helical transmembrane segments spans residues 533 to 553 (LAYL…YCLL), 569 to 589 (LYLG…LWEF), 615 to 635 (LFSI…VFII), 674 to 694 (FLPG…FSVG), 710 to 730 (AEAC…MGLF), and 737 to 757 (TPLS…VFSV).

Belongs to the glycosyltransferase 2 family. Plant cellulose synthase-like B subfamily. In terms of tissue distribution, expressed in young seedlings, primarily in the vascular tissue.

Its subcellular location is the golgi apparatus membrane. In terms of biological role, thought to be a Golgi-localized beta-glycan synthase that polymerize the backbones of noncellulosic polysaccharides (hemicelluloses) of plant cell wall. The protein is Cellulose synthase-like protein B1 (CSLB1) of Arabidopsis thaliana (Mouse-ear cress).